A 284-amino-acid chain; its full sequence is Putative mitochondrial carrier protein PET8 (284 aa).

3 Solcar repeats span residues 2 to 75 (NTFF…MKVK), 92 to 178 (IDTT…LKKT), and 192 to 271 (KGAI…VHSL). The next 6 membrane-spanning stretches (helical) occupy residues 5-25 (FLSL…FFPI), 50-70 (GLGS…ISYD), 98-118 (MLSS…AEVV), 153-169 (GWST…CIQF), 194-214 (AICG…LDFL), and 252-272 (MWIS…HSLL).

It belongs to the mitochondrial carrier (TC 2.A.29) family.

It is found in the mitochondrion inner membrane. In Saccharomyces cerevisiae (strain ATCC 204508 / S288c) (Baker's yeast), this protein is Putative mitochondrial carrier protein PET8 (PET8).